Reading from the N-terminus, the 172-residue chain is MSKVTFRADDDLVAAVEDLDASKSEVMRNALRAYLTTHAAADDVPVESVNTPVRGAATDAQKDVNVTIRVSSPSAVEEVRTTPASGGRADAEEPGDDGETDAEHADTSATGDESVCSQCGAELSADHVYCPNCGGKATHRVFCECGDEIRADWAFCPRCGRRTVSGDALDSA.

The segment at 72–113 is disordered; it reads SPSAVEEVRTTPASGGRADAEEPGDDGETDAEHADTSATGDE. The DZANK-type zinc-finger motif lies at 116 to 160; that stretch reads CSQCGAELSADHVYCPNCGGKATHRVFCECGDEIRADWAFCPRCG.

The protein belongs to the CdrL family.

The protein resides in the cytoplasm. Functionally, transcriptional regulator involved in the control of cell division. This is Transcriptional regulator CdrL from Halobacterium salinarum (strain ATCC 29341 / DSM 671 / R1).